A 206-amino-acid polypeptide reads, in one-letter code: Large ribosomal subunit protein uL4 (206 aa).

Belongs to the universal ribosomal protein uL4 family. Part of the 50S ribosomal subunit.

Functionally, one of the primary rRNA binding proteins, this protein initially binds near the 5'-end of the 23S rRNA. It is important during the early stages of 50S assembly. It makes multiple contacts with different domains of the 23S rRNA in the assembled 50S subunit and ribosome. Its function is as follows. Forms part of the polypeptide exit tunnel. The chain is Large ribosomal subunit protein uL4 from Bradyrhizobium sp. (strain BTAi1 / ATCC BAA-1182).